The following is a 258-amino-acid chain: Regulatory protein RecX (258 aa).

This sequence belongs to the RecX family.

Its subcellular location is the cytoplasm. Modulates RecA activity. The polypeptide is Regulatory protein RecX (Streptococcus pyogenes serotype M3 (strain ATCC BAA-595 / MGAS315)).